Consider the following 292-residue polypeptide: Elongation factor Ts (292 aa).

An involved in Mg(2+) ion dislocation from EF-Tu region spans residues 80 to 83 (TDFV).

The protein belongs to the EF-Ts family.

The protein resides in the cytoplasm. In terms of biological role, associates with the EF-Tu.GDP complex and induces the exchange of GDP to GTP. It remains bound to the aminoacyl-tRNA.EF-Tu.GTP complex up to the GTP hydrolysis stage on the ribosome. The chain is Elongation factor Ts from Pediococcus pentosaceus (strain ATCC 25745 / CCUG 21536 / LMG 10740 / 183-1w).